A 271-amino-acid chain; its full sequence is Ribonuclease 3 (271 aa).

Positions 5-139 constitute an RNase III domain; the sequence is PALLELKLDY…IMAAIYLDGG (135 aa). Residue E52 coordinates Mg(2+). D56 is a catalytic residue. Residues D125 and E128 each contribute to the Mg(2+) site. E128 is an active-site residue. Positions 172–241 constitute a DRBM domain; it reads NFKSALQELA…ARGLYERLMG (70 aa). Residues 241–271 are disordered; the sequence is GDPIVPLPDDSPGDSPDDSGDAAESGVISAT. Residues 251–261 are compositionally biased toward acidic residues; that stretch reads SPGDSPDDSGD.

It belongs to the ribonuclease III family. In terms of assembly, homodimer. Mg(2+) serves as cofactor.

It is found in the cytoplasm. It carries out the reaction Endonucleolytic cleavage to 5'-phosphomonoester.. Digests double-stranded RNA. Involved in the processing of primary rRNA transcript to yield the immediate precursors to the large and small rRNAs (23S and 16S). Processes some mRNAs, and tRNAs when they are encoded in the rRNA operon. Processes pre-crRNA and tracrRNA of type II CRISPR loci if present in the organism. In Solibacter usitatus (strain Ellin6076), this protein is Ribonuclease 3.